Here is a 545-residue protein sequence, read N- to C-terminus: CTP synthase (545 aa).

The amidoligase domain stretch occupies residues 1 to 266 (MATNYIFVTG…DDFVCERFRL (266 aa)). Residue Ser14 participates in CTP binding. A UTP-binding site is contributed by Ser14. ATP is bound by residues 15 to 20 (SLGKGI) and Asp72. Mg(2+) contacts are provided by Asp72 and Glu140. CTP contacts are provided by residues 147 to 149 (DIE), 187 to 192 (KTKPTQ), and Lys223. Residues 187-192 (KTKPTQ) and Lys223 each bind UTP. Position 239–241 (239–241 (KDV)) interacts with ATP. In terms of domain architecture, Glutamine amidotransferase type-1 spans 291–542 (TIGMVGKYTE…VKAAYENHKK (252 aa)). Residue Gly352 coordinates L-glutamine. Cys379 (nucleophile; for glutamine hydrolysis) is an active-site residue. L-glutamine contacts are provided by residues 380–383 (LGMQ), Glu403, and Arg470. Active-site residues include His515 and Glu517.

Belongs to the CTP synthase family. In terms of assembly, homotetramer.

The enzyme catalyses UTP + L-glutamine + ATP + H2O = CTP + L-glutamate + ADP + phosphate + 2 H(+). The catalysed reaction is L-glutamine + H2O = L-glutamate + NH4(+). It carries out the reaction UTP + NH4(+) + ATP = CTP + ADP + phosphate + 2 H(+). It functions in the pathway pyrimidine metabolism; CTP biosynthesis via de novo pathway; CTP from UDP: step 2/2. With respect to regulation, allosterically activated by GTP, when glutamine is the substrate; GTP has no effect on the reaction when ammonia is the substrate. The allosteric effector GTP functions by stabilizing the protein conformation that binds the tetrahedral intermediate(s) formed during glutamine hydrolysis. Inhibited by the product CTP, via allosteric rather than competitive inhibition. Its function is as follows. Catalyzes the ATP-dependent amination of UTP to CTP with either L-glutamine or ammonia as the source of nitrogen. Regulates intracellular CTP levels through interactions with the four ribonucleotide triphosphates. This is CTP synthase from Haemophilus influenzae (strain PittEE).